Here is a 462-residue protein sequence, read N- to C-terminus: Glycoprotein endo-alpha-1,2-mannosidase (462 aa).

At Met1 to Cys9 the chain is on the cytoplasmic side. The chain crosses the membrane as a helical; Signal-anchor for type II membrane protein span at residues Ile10 to Trp30. The Lumenal portion of the chain corresponds to Pro31 to Ser462. The tract at residues Asp60–Ser462 is catalytic.

It belongs to the glycosyl hydrolase 99 family. Undergoes proteolytic cleavage in the C-terminal region. Highly expressed in the liver and kidney.

The protein localises to the golgi apparatus membrane. The enzyme catalyses N-{alpha-Glc-(1-&gt;3)-alpha-Man-(1-&gt;2)-alpha-Man-(1-&gt;2)-alpha-Man-(1-&gt;3)-[alpha-Man-(1-&gt;2)-alpha-Man-(1-&gt;3)-[alpha-Man-(1-&gt;2)-alpha-Man-(1-&gt;6)]-alpha-Man-(1-&gt;6)]-beta-Man-(1-&gt;4)-beta-GlcNAc-(1-&gt;4)-beta-GlcNAc}-L-asparaginyl-[protein] + H2O = alpha-D-glucosyl-(1-&gt;3)-D-mannopyranose + N(4)-{alpha-D-Man-(1-&gt;2)-alpha-D-Man-(1-&gt;3)-[alpha-D-Man-(1-&gt;2)-alpha-D-Man-(1-&gt;3)-[alpha-D-Man-(1-&gt;2)-alpha-D-Man-(1-&gt;6)]-alpha-D-Man-(1-&gt;6)]-beta-D-Man-(1-&gt;4)-beta-D-GlaNAc-(1-&gt;4)-beta-D-GlcNAc}-L-asparaginyl-[protein] (N-glucan mannose isomer 8A1,2,3B1,2). The sequence is that of Glycoprotein endo-alpha-1,2-mannosidase (Manea) from Rattus norvegicus (Rat).